The primary structure comprises 431 residues: Homogentisate 1,2-dioxygenase (431 aa).

His286 functions as the Proton acceptor in the catalytic mechanism. Fe cation-binding residues include His329 and Glu335. Homogentisate-binding residues include Tyr344 and His365. His365 is a Fe cation binding site.

It belongs to the homogentisate dioxygenase family. Hexamer; dimer of trimers. Fe cation is required as a cofactor.

The catalysed reaction is homogentisate + O2 = 4-maleylacetoacetate + H(+). The protein operates within amino-acid degradation; L-phenylalanine degradation; acetoacetate and fumarate from L-phenylalanine: step 4/6. Its function is as follows. Involved in the catabolism of homogentisate (2,5-dihydroxyphenylacetate or 2,5-OH-PhAc), a central intermediate in the degradation of phenylalanine and tyrosine. Catalyzes the oxidative ring cleavage of the aromatic ring of homogentisate to yield maleylacetoacetate. The sequence is that of Homogentisate 1,2-dioxygenase from Pseudomonas fluorescens (strain Pf0-1).